Consider the following 311-residue polypeptide: MTVLWVAAVIALACLNVIQFIMKKKRDGNLAYTADQLSYMLSRDSAGQILLPTDDHALKDLLVNINLIVENRQQISAQFAKTEQSMKRMLTNMSHDLKTPLTVILGYIEAIQSDPNMPDEERERLLGKLRQKTNELIQMINSFFDLAKLESEDKEIPITKVHMNDICKRNILHYYDAVQSKGFQAAIDIPDTPVYAQANEEALDRILQNLLSNAIQYGAAGKLIGLTLSYDERNIAITVWDRGKGISETDQQRVFERLYTLEESRNKAFQGSGLGLTITKRLTEKMGGIISVQSKPYERTAFTITLKRMTY.

The helical transmembrane segment at 1-21 (MTVLWVAAVIALACLNVIQFI) threads the bilayer. Residues 22 to 311 (MKKKRDGNLA…FTITLKRMTY (290 aa)) lie on the Cytoplasmic side of the membrane. Positions 92-310 (NMSHDLKTPL…AFTITLKRMT (219 aa)) constitute a Histidine kinase domain. The residue at position 95 (His95) is a Phosphohistidine; by autocatalysis.

Its subcellular location is the cell membrane. The catalysed reaction is ATP + protein L-histidine = ADP + protein N-phospho-L-histidine.. In terms of biological role, member of the two-component regulatory system YcbM/YcbL. Probably activates YcbL by phosphorylation. This Bacillus subtilis (strain 168) protein is Sensor histidine kinase YcbM (ycbM).